The sequence spans 442 residues: MLLLELNILTLNIWGIPYVSSDRRPRIDAICKELASGKYDIVSLQEVWAQEDSELLQKGTEAVLPHSHYFHSGVMGAGLLVLSKYPILGTLFHAWSVNGYFHRIQHADWFGGKGVGLCRILVGGQMVHLYNAHLHAEYDNANDEYKTHRVIQAFDTAQFIEATRGNSALQILAGDLNAQPQDISYKVLLYTSKMLDSCDSDSFRTNECEHNSYTSKQARERNPLGIRIDHIFVRGGDHVNAEIAEYKLPFPERVPGEKFSFSDHEAVMAKLKLFKLEPRSEEPVATIEVNCLVEDGETCSVREVGAGDALTGEDDQSSQHQPEIQCNGSSTSIQSMPAARTAALLEALALCDASLLQLNTDRILYYSAATFLFVLLVLLVEFTAPVGMRTIFLLLKFIVFGVILFCVFMASIWNYMERNGVLQGKKSMEVMLHHAQKYEYFY.

Residue Glu-46 participates in Mg(2+) binding. His-264 (proton acceptor) is an active-site residue. Residues 309–330 (ALTGEDDQSSQHQPEIQCNGSS) are disordered. Positions 318 to 330 (SQHQPEIQCNGSS) are enriched in polar residues. A run of 2 helical transmembrane segments spans residues 362 to 384 (RILY…EFTA) and 391 to 413 (IFLL…ASIW).

Belongs to the neutral sphingomyelinase family.

Its subcellular location is the membrane. It carries out the reaction a sphingomyelin + H2O = phosphocholine + an N-acylsphing-4-enine + H(+). It functions in the pathway lipid metabolism; sphingolipid metabolism. The polypeptide is Putative neutral sphingomyelinase (Drosophila melanogaster (Fruit fly)).